Consider the following 736-residue polypeptide: NADPH--cytochrome P450 reductase (736 aa).

A topological domain (lumenal) is located at residue M1. A helical membrane pass occupies residues 2-24 (AVSSSSDVIVLSVGIILAALYLF). Topologically, residues 25–736 (REQIFSAAKP…RNRLLLDVWS (712 aa)) are cytoplasmic. The region spanning 66–216 (IVIFYGSQTG…DYLEWKDGMW (151 aa)) is the Flavodoxin-like domain. FMN contacts are provided by residues 72 to 77 (SQTGTA), 123 to 126 (ATYG), 165 to 174 (LGNKTYEHYN), and D200. The FAD-binding FR-type domain occupies 269–546 (KNPYPAPIIA…EGPRGAYKQG (278 aa)). Residue R289 coordinates NADP(+). FAD-binding positions include 456 to 459 (RYYS), 474 to 476 (TVV), Y480, and 495 to 498 (GVGS). NADP(+) contacts are provided by residues T577, 648–649 (SR), and 659–663 (KIYVQ). W735 contacts FAD.

This sequence belongs to the NADPH--cytochrome P450 reductase family. It in the N-terminal section; belongs to the flavodoxin family. The protein in the C-terminal section; belongs to the flavoprotein pyridine nucleotide cytochrome reductase family. FAD serves as cofactor. The cofactor is FMN.

It is found in the endoplasmic reticulum membrane. Its subcellular location is the mitochondrion outer membrane. It localises to the cell membrane. It carries out the reaction 2 oxidized [cytochrome P450] + NADPH = 2 reduced [cytochrome P450] + NADP(+) + H(+). Its function is as follows. This enzyme is required for electron transfer from NADP to cytochrome P450 in microsomes. It can also provide electron transfer to heme oxygenase and cytochrome B5. Involved in ergosterol biosynthesis. This chain is NADPH--cytochrome P450 reductase (CPR), found in Phanerodontia chrysosporium (White-rot fungus).